A 526-amino-acid polypeptide reads, in one-letter code: Bifunctional purine biosynthesis protein PurH (526 aa).

The MGS-like domain maps to 1–145 (MSKAPLALLS…KNHAHVGIVT (145 aa)).

It belongs to the PurH family.

It catalyses the reaction (6R)-10-formyltetrahydrofolate + 5-amino-1-(5-phospho-beta-D-ribosyl)imidazole-4-carboxamide = 5-formamido-1-(5-phospho-D-ribosyl)imidazole-4-carboxamide + (6S)-5,6,7,8-tetrahydrofolate. The catalysed reaction is IMP + H2O = 5-formamido-1-(5-phospho-D-ribosyl)imidazole-4-carboxamide. The protein operates within purine metabolism; IMP biosynthesis via de novo pathway; 5-formamido-1-(5-phospho-D-ribosyl)imidazole-4-carboxamide from 5-amino-1-(5-phospho-D-ribosyl)imidazole-4-carboxamide (10-formyl THF route): step 1/1. It functions in the pathway purine metabolism; IMP biosynthesis via de novo pathway; IMP from 5-formamido-1-(5-phospho-D-ribosyl)imidazole-4-carboxamide: step 1/1. This is Bifunctional purine biosynthesis protein PurH from Psychrobacter arcticus (strain DSM 17307 / VKM B-2377 / 273-4).